The following is a 637-amino-acid chain: MSQQETHGFQTEVKQLLHLMIHSLYSNKEIFLRELVSNAADAADKLRYLALTNDALYEGDGELRVRISADKEKGTVTIEDNGVGMTRDGVIEHLGTIAKSGTAEFFKNLSGEASKDSQLIGQFGVGFYSAFIVAKKVTVRTRAAGHKANEAVLWESEGEGSFTVDTITKASRGTEITLHLRDEEKEFADEWRLRSIITKYSDHISVPVEMWQEGTPERDGPDGEKIPATEGYWKVMNKATALWMRNKSEISDEEYQEFYKHISHDYTDALLWSHNRVEGKQEYTNLLYIPSKAPWDLWNRDRKHGLKLFVQRVFIMDDAEQFMPSYLRFVQGLIDSNDLPLNVSREILQDNHITKAMRTGITKRVLGMLEKLAKDDAEKYQQFWAEFGQVLKEGPAEDFANRERIAGLLRFASTHTGSAAPTVSLDDYLSRMKEGQNKIYYIVADSHEAAANSPHLELLRKKGIEVLLMSERIDEWLINHLTEYKEKQLHSVTRGELELGELEDAAEKEAQEKLAEESAPLVERIKAALGASVADVKVTSRLTDTPACVVTGEGEMSSQMIKLMQAAGQPVPEVKPTFEINPAHPLVSRLNDLQDEAAFADWSNLLLQQAQLSEKGSLADPSAFIKLMNQMLLANLK.

An a; substrate-binding region spans residues 1 to 345; sequence MSQQETHGFQ…SNDLPLNVSR (345 aa). Positions 346–562 are b; that stretch reads EILQDNHITK…EGEMSSQMIK (217 aa). A c region spans residues 563–637; sequence LMQAAGQPVP…MNQMLLANLK (75 aa).

It belongs to the heat shock protein 90 family. Homodimer.

The protein localises to the cytoplasm. Molecular chaperone. Has ATPase activity. The sequence is that of Chaperone protein HtpG from Shewanella sp. (strain MR-7).